We begin with the raw amino-acid sequence, 272 residues long: ATP synthase subunit a (272 aa).

The next 6 membrane-spanning stretches (helical) occupy residues 41 to 61 (VLNIDSIIFSLVLGCFFLSIF), 110 to 130 (FVWVFLMNLMDLIPIDFFPFI), 143 to 165 (VPSADINITLSMSLGVFILILFY), 188 to 208 (VFFIFNFLLELVSLLSKPISL), 222 to 242 (IFILIAGLLPWWSQFFLNVPW), and 243 to 263 (AIFHILIISLQAFIFMVLTIV).

The protein belongs to the ATPase A chain family. F-type ATPases have 2 components, CF(1) - the catalytic core - and CF(0) - the membrane proton channel. CF(1) has five subunits: alpha(3), beta(3), gamma(1), delta(1), epsilon(1). CF(0) has three main subunits: a(1), b(2) and c(9-12). The alpha and beta chains form an alternating ring which encloses part of the gamma chain. CF(1) is attached to CF(0) by a central stalk formed by the gamma and epsilon chains, while a peripheral stalk is formed by the delta and b chains.

Its subcellular location is the cell membrane. Key component of the proton channel; it plays a direct role in the translocation of protons across the membrane. In Buchnera aphidicola subsp. Schizaphis graminum (strain Sg), this protein is ATP synthase subunit a.